The primary structure comprises 163 residues: Myosin light chain 2 (163 aa).

2 consecutive EF-hand domains span residues Asp15–Thr50 and Pro92–Glu127. Residues Asp28, Asp30, Asp32, and Asp39 each contribute to the Ca(2+) site.

In terms of assembly, interacts with the IQ domain of MYO1.

It is found in the bud neck. Its function is as follows. Regulatory light chain for the class II conventional myosin MYO1. May play a role in the disassembly of the MYO1 ring at the bud neck at the end of its contraction during cytokinesis. This Saccharomyces cerevisiae (strain ATCC 204508 / S288c) (Baker's yeast) protein is Myosin light chain 2 (MLC2).